A 317-amino-acid chain; its full sequence is Beta-ketoacyl-[acyl-carrier-protein] synthase III (317 aa).

Residues Cys112 and His244 contribute to the active site. The ACP-binding stretch occupies residues 245-249 (QANIR). Residue Asn274 is part of the active site.

This sequence belongs to the thiolase-like superfamily. FabH family. In terms of assembly, homodimer.

The protein localises to the cytoplasm. The enzyme catalyses malonyl-[ACP] + acetyl-CoA + H(+) = 3-oxobutanoyl-[ACP] + CO2 + CoA. It functions in the pathway lipid metabolism; fatty acid biosynthesis. Its function is as follows. Catalyzes the condensation reaction of fatty acid synthesis by the addition to an acyl acceptor of two carbons from malonyl-ACP. Catalyzes the first condensation reaction which initiates fatty acid synthesis and may therefore play a role in governing the total rate of fatty acid production. Possesses both acetoacetyl-ACP synthase and acetyl transacylase activities. Its substrate specificity determines the biosynthesis of branched-chain and/or straight-chain of fatty acids. In Rickettsia prowazekii (strain Madrid E), this protein is Beta-ketoacyl-[acyl-carrier-protein] synthase III.